We begin with the raw amino-acid sequence, 704 residues long: Glycine--tRNA ligase beta subunit (704 aa).

Belongs to the class-II aminoacyl-tRNA synthetase family. In terms of assembly, tetramer of two alpha and two beta subunits.

Its subcellular location is the cytoplasm. It carries out the reaction tRNA(Gly) + glycine + ATP = glycyl-tRNA(Gly) + AMP + diphosphate. The sequence is that of Glycine--tRNA ligase beta subunit from Delftia acidovorans (strain DSM 14801 / SPH-1).